The primary structure comprises 82 residues: UPF0180 protein BAA_1480 (82 aa).

This sequence belongs to the UPF0180 family.

The polypeptide is UPF0180 protein BAA_1480 (Bacillus anthracis (strain A0248)).